The following is a 443-amino-acid chain: Probable D-serine dehydratase (443 aa).

N6-(pyridoxal phosphate)lysine is present on Lys-118.

The protein belongs to the serine/threonine dehydratase family. DsdA subfamily. Pyridoxal 5'-phosphate is required as a cofactor.

The catalysed reaction is D-serine = pyruvate + NH4(+). This Aeromonas hydrophila subsp. hydrophila (strain ATCC 7966 / DSM 30187 / BCRC 13018 / CCUG 14551 / JCM 1027 / KCTC 2358 / NCIMB 9240 / NCTC 8049) protein is Probable D-serine dehydratase.